Reading from the N-terminus, the 268-residue chain is Tryptophan synthase alpha chain (268 aa).

Catalysis depends on proton acceptor residues glutamate 49 and aspartate 60.

Belongs to the TrpA family. As to quaternary structure, tetramer of two alpha and two beta chains.

It carries out the reaction (1S,2R)-1-C-(indol-3-yl)glycerol 3-phosphate + L-serine = D-glyceraldehyde 3-phosphate + L-tryptophan + H2O. Its pathway is amino-acid biosynthesis; L-tryptophan biosynthesis; L-tryptophan from chorismate: step 5/5. The alpha subunit is responsible for the aldol cleavage of indoleglycerol phosphate to indole and glyceraldehyde 3-phosphate. This Serratia proteamaculans (strain 568) protein is Tryptophan synthase alpha chain.